The following is an 858-amino-acid chain: Autoinducer 2 sensor kinase/phosphatase LuxQ (858 aa).

Helical transmembrane passes span 14–34 (STLITKIIILVLAPIILGIFV) and 362–382 (LFNFALSPIMVWSEAGVLIQI). In terms of domain architecture, Histidine kinase spans 488–710 (KMSHEIRTPI…TFVVTLPVKD (223 aa)). Residue His491 is modified to Phosphohistidine; by autocatalysis. The Response regulatory domain occupies 735–850 (KVLLVEDNHT…ALHEAFVDFK (116 aa)). The residue at position 784 (Asp784) is a 4-aspartylphosphate.

As to quaternary structure, binds the complex formed by the autoinducer and LuxP.

Its subcellular location is the cell inner membrane. The catalysed reaction is ATP + protein L-histidine = ADP + protein N-phospho-L-histidine.. At low cell density, in absence of autoinducer has a kinase activity, and autophosphorylates on a histidine residue. The phosphoryl group is then transferred to an aspartate residue in the response regulator domain. The phosphoryl group is transferred to LuxU, and ultimately to LuxO. At high cell density, in the presence of autoinducer, the kinase activity is inactivated, and the response regulator domain has a phosphatase activity. This is Autoinducer 2 sensor kinase/phosphatase LuxQ (luxQ) from Vibrio parahaemolyticus serotype O3:K6 (strain RIMD 2210633).